An 88-amino-acid chain; its full sequence is UPF0367 protein Tery_1229 (88 aa).

This sequence belongs to the UPF0367 family.

In Trichodesmium erythraeum (strain IMS101), this protein is UPF0367 protein Tery_1229.